Reading from the N-terminus, the 257-residue chain is Imidazole glycerol phosphate synthase subunit HisF (257 aa).

Residues Asp12 and Asp131 contribute to the active site.

Belongs to the HisA/HisF family. Heterodimer of HisH and HisF.

It localises to the cytoplasm. It carries out the reaction 5-[(5-phospho-1-deoxy-D-ribulos-1-ylimino)methylamino]-1-(5-phospho-beta-D-ribosyl)imidazole-4-carboxamide + L-glutamine = D-erythro-1-(imidazol-4-yl)glycerol 3-phosphate + 5-amino-1-(5-phospho-beta-D-ribosyl)imidazole-4-carboxamide + L-glutamate + H(+). It functions in the pathway amino-acid biosynthesis; L-histidine biosynthesis; L-histidine from 5-phospho-alpha-D-ribose 1-diphosphate: step 5/9. Functionally, IGPS catalyzes the conversion of PRFAR and glutamine to IGP, AICAR and glutamate. The HisF subunit catalyzes the cyclization activity that produces IGP and AICAR from PRFAR using the ammonia provided by the HisH subunit. The sequence is that of Imidazole glycerol phosphate synthase subunit HisF from Kineococcus radiotolerans (strain ATCC BAA-149 / DSM 14245 / SRS30216).